Consider the following 378-residue polypeptide: tRNA (guanine(26)-N(2))-dimethyltransferase (378 aa).

The Trm1 methyltransferase domain occupies 4–374 (KEVTEGKVRI…KEYEEITKCI (371 aa)). Positions 44, 69, 87, 114, and 115 each coordinate S-adenosyl-L-methionine. Residues C246, C249, C263, and C266 each contribute to the Zn(2+) site.

This sequence belongs to the class I-like SAM-binding methyltransferase superfamily. Trm1 family.

It carries out the reaction guanosine(26) in tRNA + 2 S-adenosyl-L-methionine = N(2)-dimethylguanosine(26) in tRNA + 2 S-adenosyl-L-homocysteine + 2 H(+). Its function is as follows. Dimethylates a single guanine residue at position 26 of a number of tRNAs using S-adenosyl-L-methionine as donor of the methyl groups. This Saccharolobus solfataricus (strain ATCC 35092 / DSM 1617 / JCM 11322 / P2) (Sulfolobus solfataricus) protein is tRNA (guanine(26)-N(2))-dimethyltransferase.